Reading from the N-terminus, the 351-residue chain is Inner kinetochore subunit fta2 (351 aa).

Residues 1 to 71 (MSGRRYSQIS…SSNGRVDTDR (71 aa)) form a disordered region. The segment covering 7 to 18 (SQISQQEGSSSS) has biased composition (low complexity). The span at 54 to 66 (NENSGQSKSSNGR) shows a compositional bias: polar residues.

It belongs to the CENP-P/CTF19 family. Component of the heterotetrameric kinetochore subcomplex COMA, which consists of fta2, fta7, mal2 and mis17. The COMA subcomplex is part of a larger constitutive centromere-associated network (CCAN) (also known as central kinetochore Sim4 complex in fission yeast), which is composed of at least cnl2, cnp3, cnp20, fta1, fta2, fta3, fta4, fta6, fta7, mal2, mhf1, mhf2, mis6, mis15, mis17, sim4 and wip1.

It localises to the nucleus. The protein localises to the chromosome. The protein resides in the centromere. It is found in the kinetochore. Its function is as follows. Component of the kinetochore, a multiprotein complex that assembles on centromeric DNA and attaches chromosomes to spindle microtubules, mediating chromosome segregation and sister chromatid segregation during meiosis and mitosis. Component of the inner kinetochore COMA complex, which connects centromere-associated proteins and the outer kinetochore. COMA interacts with other inner kinetochore proteins to form the inner kinetochore constitutive centromere-associated network (CCAN), which serves as a structural platform for outer kinetochore assembly. Fta2, fta3 and fta4 associate with the central core (cnt) and inner repeat (inr) region of the centromere. The chain is Inner kinetochore subunit fta2 (fta2) from Schizosaccharomyces pombe (strain 972 / ATCC 24843) (Fission yeast).